We begin with the raw amino-acid sequence, 292 residues long: Probable alpha-L-glutamate ligase (292 aa).

The ATP-grasp domain occupies 104-287; the sequence is HQLLAAKGID…VATRIIEHVE (184 aa). ATP-binding positions include lysine 141, 178 to 179, aspartate 187, and 211 to 213; these read EF and RSN. 3 residues coordinate Mg(2+): aspartate 248, glutamate 260, and asparagine 262. Mn(2+) is bound by residues aspartate 248, glutamate 260, and asparagine 262.

This sequence belongs to the RimK family. It depends on Mg(2+) as a cofactor. Mn(2+) is required as a cofactor.

The sequence is that of Probable alpha-L-glutamate ligase from Stenotrophomonas maltophilia (strain K279a).